We begin with the raw amino-acid sequence, 592 residues long: MDVRSLPSNGVATIQDSAPTAATILGSSAATLGRHLSRRLVQAGVTDIFTVPGDFNLSLLDQLIANPELNNIGCCNELNAGYAADGYARSRGVGACVVTFTVGGLSVLNAIAGAYSENLPVICIVGGPNSNDFGTNRILHHTIGLPDFSQELRCFQTVTCYQAVVNHLEDAHEQIDKAIATALRESKPVYISISCNLAAIPHPTFASYPVPFDLTPRLSNKDCLEAAVEATLEFLNKAVKPVMVGGPKLRVAKARDAFVELADASGYPVAVMPSAKGFVPENHPHFIGTYWGAVSTLFCSEIVESADAYIFAGPIFNDYSSVGYSLLLKKEKAIIVHPDSVVVANGPTFGCVRMSEFFRELAKRVKPNKTAYENYHRIFVPEGKPLKCKPREPLRINAMFQHIQKMLSNETAVIAETGDSWFNCQKLKLPKGCGYEFQMQYGSIGWSVGATLGYAQATPEKRVLSFIGDGSFQVTAQDVSTMIRNGQKTIIFLINNGGYTIEVEIHDGPYNVIKNWNYTGLVDAIHNGEGKCWTTKVRYEEELVEAINTATLEKKDSLCFIEVIVHKDDTSKELLEWGSRVSAANGRPPNPQ.

2 residues coordinate substrate: Asp-54 and His-141. The thiamine pyrophosphate binding stretch occupies residues 419 to 501 (DSWFNCQKLK…FLINNGGYTI (83 aa)). Mg(2+) is bound by residues Asp-469, Asn-496, and Gly-498. Glu-502 contributes to the substrate binding site.

This sequence belongs to the TPP enzyme family. Homotetramer. The cofactor is a metal cation. Thiamine diphosphate serves as cofactor. As to expression, expressed at low levels in roots and shoots.

It catalyses the reaction a 2-oxocarboxylate + H(+) = an aldehyde + CO2. The sequence is that of Pyruvate decarboxylase 3 (PDC3) from Arabidopsis thaliana (Mouse-ear cress).